The chain runs to 391 residues: D-gluconate/D-galactonate dehydratase (391 aa).

Glu198 serves as a coordination point for Mg(2+). Residue His200 is the Proton donor of the active site. Residues Glu224 and Glu250 each coordinate Mg(2+). His300 serves as the catalytic Proton acceptor.

The protein belongs to the mandelate racemase/muconate lactonizing enzyme family. GaD subfamily. In terms of assembly, homooctamer. The cofactor is Mg(2+).

The catalysed reaction is D-gluconate = 2-dehydro-3-deoxy-D-gluconate + H2O. The enzyme catalyses D-galactonate = 2-dehydro-3-deoxy-D-galactonate + H2O. It functions in the pathway carbohydrate acid metabolism; D-gluconate degradation. In terms of biological role, involved in the degradation of glucose and galactose via the nonphosphorylative variant of Entner-Doudoroff pathway. Catalyzes the dehydration of gluconate to produce 2-keto-3-deoxygluconate (KDG). It is also able to catalyze the dehydration of galactonate to produce 2-keto-3-deoxygalactonate (KDGal). This Picrophilus torridus (strain ATCC 700027 / DSM 9790 / JCM 10055 / NBRC 100828 / KAW 2/3) protein is D-gluconate/D-galactonate dehydratase.